An 86-amino-acid chain; its full sequence is Large ribosomal subunit protein bL27 (86 aa).

The disordered stretch occupies residues 1 to 21; it reads MAHKKGGGSSRNGRDSESKRL.

It belongs to the bacterial ribosomal protein bL27 family.

The polypeptide is Large ribosomal subunit protein bL27 (Rubrobacter xylanophilus (strain DSM 9941 / JCM 11954 / NBRC 16129 / PRD-1)).